Consider the following 276-residue polypeptide: Large ribosomal subunit protein uL2c (276 aa).

The disordered stretch occupies residues 223–254 (VVKNPIDHPHGGGEGRSPIGRAKPVTPWGQPA).

Belongs to the universal ribosomal protein uL2 family. Part of the 50S ribosomal subunit.

The protein resides in the plastid. It is found in the chloroplast. This Emiliania huxleyi (Coccolithophore) protein is Large ribosomal subunit protein uL2c (rpl2).